We begin with the raw amino-acid sequence, 541 residues long: MADVTINADEVRSALNDFAASYDPGNVERVEVGRVSSAADGIAHVEGLPSVMANELLKFENGVLGLALNLDTRDIGVVVLGDFQGIEEGQEVHRTGEVLSVPVGEGYLGRVVDPLGEPLDDLGPIATDGRRELELQAPGVTMRKSVHEPLQTGIKAIDAMIPIGRGQRQLIIGDRQTGKTAIAVDAILNQRSNWESGDVEKQVRCIYVAVGQKASTIAAVRQTLEDNGALEYTTIVAAPASESAGLKYLAPYAGSAIGQHWMYGGKHVLIVFDDLSKQAEAYRAVSLLLRRPPGREAYPGDVFYLHSRLLERCAKLSDELGAGSMTGLPIIETKANDVSAFIPTNVISITDGQIFLQSDLFNANQRPAVDVGISVSRVGGAAQVKAMKKVSGTLKLDLASYRSMQAFAMFASDLDAASRQQLTRGERLMELLKQPQYTPYPVADQVVSIWAGTTGQLDDVDVANVADFERALLDQVRRTTNVMDSINSTGKLEDDAVAALKTAVAEVKRDFHGSKHGIEPGVEEHESLGATAVNQETIVKK.

Residue 173 to 180 participates in ATP binding; the sequence is GDRQTGKT. The span at 517–527 shows a compositional bias: basic and acidic residues; it reads GIEPGVEEHES. The interval 517-541 is disordered; that stretch reads GIEPGVEEHESLGATAVNQETIVKK. The segment covering 532-541 has biased composition (polar residues); the sequence is AVNQETIVKK.

The protein belongs to the ATPase alpha/beta chains family. In terms of assembly, F-type ATPases have 2 components, CF(1) - the catalytic core - and CF(0) - the membrane proton channel. CF(1) has five subunits: alpha(3), beta(3), gamma(1), delta(1), epsilon(1). CF(0) has three main subunits: a(1), b(2) and c(9-12). The alpha and beta chains form an alternating ring which encloses part of the gamma chain. CF(1) is attached to CF(0) by a central stalk formed by the gamma and epsilon chains, while a peripheral stalk is formed by the delta and b chains.

The protein localises to the cell membrane. The enzyme catalyses ATP + H2O + 4 H(+)(in) = ADP + phosphate + 5 H(+)(out). Its function is as follows. Produces ATP from ADP in the presence of a proton gradient across the membrane. The alpha chain is a regulatory subunit. This is ATP synthase subunit alpha from Kocuria rhizophila (strain ATCC 9341 / DSM 348 / NBRC 103217 / DC2201).